The chain runs to 209 residues: Large ribosomal subunit protein uL3 (209 aa).

Belongs to the universal ribosomal protein uL3 family. As to quaternary structure, part of the 50S ribosomal subunit. Forms a cluster with proteins L14 and L19.

In terms of biological role, one of the primary rRNA binding proteins, it binds directly near the 3'-end of the 23S rRNA, where it nucleates assembly of the 50S subunit. This is Large ribosomal subunit protein uL3 from Carboxydothermus hydrogenoformans (strain ATCC BAA-161 / DSM 6008 / Z-2901).